Here is a 232-residue protein sequence, read N- to C-terminus: Ubiquinone biosynthesis O-methyltransferase (232 aa).

R36, G55, D76, and L120 together coordinate S-adenosyl-L-methionine.

The protein belongs to the methyltransferase superfamily. UbiG/COQ3 family.

The enzyme catalyses a 3-demethylubiquinol + S-adenosyl-L-methionine = a ubiquinol + S-adenosyl-L-homocysteine + H(+). The catalysed reaction is a 3-(all-trans-polyprenyl)benzene-1,2-diol + S-adenosyl-L-methionine = a 2-methoxy-6-(all-trans-polyprenyl)phenol + S-adenosyl-L-homocysteine + H(+). The protein operates within cofactor biosynthesis; ubiquinone biosynthesis. Its function is as follows. O-methyltransferase that catalyzes the 2 O-methylation steps in the ubiquinone biosynthetic pathway. The chain is Ubiquinone biosynthesis O-methyltransferase from Pseudomonas fluorescens (strain ATCC BAA-477 / NRRL B-23932 / Pf-5).